The sequence spans 217 residues: Adenylate kinase (217 aa).

Position 10–15 (10–15 (GAGKGT)) interacts with ATP. An NMP region spans residues 30-59 (STGDIFRANIKNNTELGAKAKEYMDQGLLV). AMP is bound by residues Thr-31, Arg-36, 57-59 (LLV), 85-88 (GFPR), and Gln-92. The LID stretch occupies residues 126-163 (GRRACVSCGGTYHVVFTPTKKEGICDACGGELTIRDDD). An ATP-binding site is contributed by Arg-127. Zn(2+) contacts are provided by Cys-130 and Cys-133. Residue 136-137 (TY) participates in ATP binding. Zn(2+) is bound by residues Cys-150 and Cys-153. Positions 160 and 171 each coordinate AMP. Lys-199 is an ATP binding site.

This sequence belongs to the adenylate kinase family. In terms of assembly, monomer.

The protein localises to the cytoplasm. It carries out the reaction AMP + ATP = 2 ADP. It participates in purine metabolism; AMP biosynthesis via salvage pathway; AMP from ADP: step 1/1. Its function is as follows. Catalyzes the reversible transfer of the terminal phosphate group between ATP and AMP. Plays an important role in cellular energy homeostasis and in adenine nucleotide metabolism. The polypeptide is Adenylate kinase (Lachnoclostridium phytofermentans (strain ATCC 700394 / DSM 18823 / ISDg) (Clostridium phytofermentans)).